Here is an 830-residue protein sequence, read N- to C-terminus: MPPSAGLATESLPAATCPAKKDAYAAAASPESETKLAAGDERAPLVRTTRISTTTIKLYRLTIFVRIAIFVLFFKWRITYAARAISSTDAGGIGMSKAATFWTASIAGELWFAFMWVLDQLPKTMPVRRAVDVTALNDDTLLPAMDVFVTTADPDKEPPLATANTVLSILAAGYPAGKVTCYVSDDAGAEVTRGAVVEAARFAALWVPFCRKHGVEPRNPEAYFNGGEGGGGGGKARVVARGSYKGRAWPELVRDRRRVRREYEEMRLRIDALQAADARRRRCGAADDHAGVVQVLIDSAGSAPQLGVADGSKLIDLASVDVRLPALVYVCREKRRGRAHHRKAGAMNALLRASAVLSNAPFILNLDCDHYVNNSQALRAGICFMIERRGGGAEDAGDVAFVQFPQRFDGVDPGDRYANHNRVFFDCTELGLDGLQGPIYVGTGCLFRRVALYGVDPPRWRSPGGGVAADPAKFGESAPFLASVRAEQSHSRDDGDAIAEASALVSCAYEDGTAWGRDVGWVYGTVTEDVATGFCMHRRGWRSAYYAAAPDAFRGTAPINLADRLHQVLRWAAGSLEIFFSRNNALLAGGRRRLHPLQRAAYLNTTVYPFTSLFLMAYCLFPAIPLIAGGGGWNAAPTPTYVAFLAALMVTLAAVAVLETRWSGIALGEWWRNEQFWMVSATSAYLAAVAQVALKVATGKEISFKLTSKHLASSATPVAGKDRQYAELYAVRWTALMAPTAAALAVNVASMAAAGGGGRWWWWDAPSAAAAAAAALPVAFNVWVVVHLYPFALGLMGRRSKAVRPILFLFAVVAYLAVRFLCLLLQFHTA.

2 consecutive transmembrane segments (helical) span residues 61–81 (LTIFVRIAIFVLFFKWRITYA) and 98–118 (AATFWTASIAGELWFAFMWVL). The active site involves Asp186. A coiled-coil region spans residues 251 to 279 (ELVRDRRRVRREYEEMRLRIDALQAADAR). Substrate contacts are provided by Asp367 and Asp369. Asp529 is a catalytic residue. A run of 6 helical transmembrane segments spans residues 613–633 (LFLMAYCLFPAIPLIAGGGGW), 638–658 (TPTYVAFLAALMVTLAAVAVL), 676–696 (FWMVSATSAYLAAVAQVALKV), 735–755 (ALMAPTAAALAVNVASMAAAG), 776–796 (LPVAFNVWVVVHLYPFALGLM), and 805–825 (PILFLFAVVAYLAVRFLCLLL).

It belongs to the glycosyltransferase 2 family. Plant cellulose synthase-like F subfamily. As to expression, expressed in mature pollen.

It localises to the golgi apparatus membrane. In terms of biological role, may catalyze both beta-1,3 and beta-1,4 glycosidic linkage on beta-D-glucan. Essential for (1,3;1,4)-beta-D-glucans synthesis in grasses and cereals (Poaceae). The mixed-linked glucans (which are not present in walls of dicotyledons or most other monocotyledonous plants) are particularly important constituents of the walls of the starchy endosperm and aleurone cells of cereal grains such as oats, wheat, rice and barley. They can account for up to 70% by weight of the wall. The chain is Probable mixed-linked glucan synthase 7 (CSLF7) from Oryza sativa subsp. japonica (Rice).